The following is a 416-amino-acid chain: Enterobactin exporter EntS (416 aa).

Topologically, residues 1–21 (MNKQSWLLNLSLLKTHPAFRA) are cytoplasmic. The chain crosses the membrane as a helical span at residues 22–42 (VFLARFISIVSLGLLGVAVPV). Residues 43 to 55 (QIQIMTHSTWQVG) are Periplasmic-facing. Residues 56–76 (LSVTLTGGAMFVGLMVGGVLA) traverse the membrane as a helical segment. Over 77 to 83 (DRYERKK) the chain is Cytoplasmic. A helical transmembrane segment spans residues 84–104 (VILLARGTCGIGFIGLCLNAL). At 105 to 109 (LPEPS) the chain is on the periplasmic side. The helical transmembrane segment at 110–130 (LLAIYLLGLWDGFFASLGVTA) threads the bilayer. Over 131–156 (LLAATPALVGRENLMQAGAITMLTVR) the chain is Cytoplasmic. The chain crosses the membrane as a helical span at residues 157–177 (LGSVISPMIGGLLLATGGVAW). Position 178 (asparagine 178) is a topological domain, periplasmic. The chain crosses the membrane as a helical span at residues 179-199 (YGLAAAGTFITLLPLLSLPAL). Topologically, residues 200-218 (PPPPQPREHPLKSLLAGFR) are cytoplasmic. A helical membrane pass occupies residues 219 to 239 (FLLASPLVGGIALLGGLLTMA). Residues 240 to 256 (SAVRVLYPALADNWQMS) lie on the Periplasmic side of the membrane. A helical membrane pass occupies residues 257–277 (AAQIGFLYAAIPLGAAIGALT). At 278-287 (SGKLAHSVRP) the chain is on the cytoplasmic side. Residues 288 to 307 (GLLMLLSTLGAFLAIGLFGL) traverse the membrane as a helical segment. At 308-313 (MPMWIL) the chain is on the periplasmic side. A helical membrane pass occupies residues 314 to 336 (GVVCLALFGWLSAVSSLLQYTML). Topologically, residues 337–356 (QTQTPEAMLGRINGLWTAQN) are cytoplasmic. The chain crosses the membrane as a helical span at residues 357 to 377 (VTGDAIGAALLGGLGAMMTPV). Alanine 378 is a topological domain (periplasmic). The chain crosses the membrane as a helical span at residues 379-399 (SASASGFGLLIIGVLLLLVLV). Residues 400-416 (ELRRFRQTPPQVTASDS) lie on the Cytoplasmic side of the membrane.

It belongs to the major facilitator superfamily. EntS (TC 2.A.1.38) family.

The protein localises to the cell inner membrane. Functionally, component of an export pathway for enterobactin. This chain is Enterobactin exporter EntS, found in Escherichia coli O127:H6 (strain E2348/69 / EPEC).